Here is a 583-residue protein sequence, read N- to C-terminus: Aspartate--tRNA ligase (583 aa).

An L-aspartate-binding site is contributed by Glu174. An aspartate region spans residues 198 to 201; the sequence is QITK. Residue Arg220 participates in L-aspartate binding. ATP contacts are provided by residues 220-222 and Gln229; that span reads RDE. His443 is an L-aspartate binding site. Residue Glu477 participates in ATP binding. Arg484 provides a ligand contact to L-aspartate. 529–532 provides a ligand contact to ATP; sequence GLDR.

Belongs to the class-II aminoacyl-tRNA synthetase family. Type 1 subfamily. Homodimer.

Its subcellular location is the cytoplasm. The enzyme catalyses tRNA(Asp) + L-aspartate + ATP = L-aspartyl-tRNA(Asp) + AMP + diphosphate. In terms of biological role, catalyzes the attachment of L-aspartate to tRNA(Asp) in a two-step reaction: L-aspartate is first activated by ATP to form Asp-AMP and then transferred to the acceptor end of tRNA(Asp). In Streptococcus agalactiae serotype III (strain NEM316), this protein is Aspartate--tRNA ligase.